A 116-amino-acid chain; its full sequence is Tyrosine-protein phosphatase 10 (116 aa).

The Tyrosine-protein phosphatase domain occupies 1-116 (WRMVWEQNVS…SPTGYGPIVV (116 aa)). Aspartate 86 is a binding site for substrate.

Belongs to the protein-tyrosine phosphatase family.

The enzyme catalyses O-phospho-L-tyrosyl-[protein] + H2O = L-tyrosyl-[protein] + phosphate. The sequence is that of Tyrosine-protein phosphatase 10 (STY-10) from Styela plicata (Wrinkled sea squirt).